A 641-amino-acid chain; its full sequence is Epithelial sodium channel subunit beta (641 aa).

Over 1-50 (MHVKKYLLKGLHRLQKGPGYTYKELLVWYCDNTNTHGPKRIICEGPKKKA) the chain is Cytoplasmic. The chain crosses the membrane as a helical span at residues 51 to 71 (MWFVLTLLFTSLVCWQWGLFI). At 72-533 (KTYLNWEVSV…GGQFGFWMGG (462 aa)) the chain is on the extracellular side. Intrachain disulfides connect C98/C273, C185/C190, C197/C204, C250/C257, C362/C449, C387/C445, C391/C441, C400/C427, and C402/C416. Residue N141 is glycosylated (N-linked (GlcNAc...) asparagine). N-linked (GlcNAc...) asparagine glycosylation occurs at N379. Residues 534 to 554 (SVLCLIEFGEIIIDFVWITII) traverse the membrane as a helical segment. At 555 to 641 (KLVALAKSVR…IESDSEGDAI (87 aa)) the chain is on the cytoplasmic side. The disordered stretch occupies residues 597 to 624 (TPGPDVEAYPHEQNPPIPGTPPPNYDSL). Positions 609–620 (QNPPIPGTPPPN) are enriched in pro residues. The PY motif; recruits WW domain-containing proteins and is thereby required for ubiquitination and inhibition of the channel by NEDD4 and NEDD4L signature appears at 617-621 (PPPNY). S634 and S636 each carry phosphoserine.

Belongs to the amiloride-sensitive sodium channel (TC 1.A.6) family. SCNN1B subfamily. In terms of assembly, component of the heterotrimeric epithelial sodium channel (ENaC) composed of an alpha/SCNN1A, a beta/SCNN1B and a gamma/SCNN1G subunit. An additional delta/SCNN1D subunit can replace the alpha/SCNN1A subunit to form an alternative channel with specific properties. Interacts with WWP1 (via WW domains). Interacts with WWP2 (via WW domains); inhibits the channel. Interacts with the full-length immature form of PCSK9 (pro-PCSK9). Interacts (N-glycosylated) with BPIFA1; the interaction is direct and inhibits the proteolytic processing of SCNN1A and SCNN1G and the activation of ENaC. Post-translationally, ubiquitinated. Can be ubiquitinated at multiple sites and undergo monoubiquitination and polyubiquitination. Ubiquitination by NEDD4 or NEDD4L inhibits the ENaC channel through endocytosis, intracellular retention and degradation of its individual subunits. However, some studies could not confirm the ubiquitination of this subunit of the ENaC. Phosphorylated on serine and threonine residues. Aldosterone and insulin increase the basal level of phosphorylation. In terms of processing, N-glycosylated. N-glycosylation is required for interaction with BPIFA1.

It localises to the apical cell membrane. Its subcellular location is the cytoplasmic vesicle membrane. It catalyses the reaction Na(+)(in) = Na(+)(out). Originally identified and characterized by its inhibition by the diuretic drug amiloride. In terms of biological role, this is one of the three pore-forming subunits of the heterotrimeric epithelial sodium channel (ENaC), a critical regulator of sodium balance and fluid homeostasis. ENaC operates in epithelial tissues, where it mediates the electrodiffusion of sodium ions from extracellular fluid through the apical membrane of cells, with water following osmotically. It plays a key role in maintaining sodium homeostasis through electrogenic sodium reabsorption in the kidneys. Additionally, ENaC is essential for airway surface liquid homeostasis, which is crucial for proper mucus clearance. The polypeptide is Epithelial sodium channel subunit beta (Bos taurus (Bovine)).